The following is a 433-amino-acid chain: Signal recognition particle 54 kDa protein (433 aa).

GTP contacts are provided by residues 100–107 (GLQGSGKT), 180–184 (DTAGR), and 238–241 (TKFD).

This sequence belongs to the GTP-binding SRP family. SRP54 subfamily. In terms of assembly, part of the signal recognition particle protein translocation system, which is composed of SRP and FtsY. Archaeal SRP consists of a 7S RNA molecule of 300 nucleotides and two protein subunits: SRP54 and SRP19.

It is found in the cytoplasm. The catalysed reaction is GTP + H2O = GDP + phosphate + H(+). Involved in targeting and insertion of nascent membrane proteins into the cytoplasmic membrane. Binds to the hydrophobic signal sequence of the ribosome-nascent chain (RNC) as it emerges from the ribosomes. The SRP-RNC complex is then targeted to the cytoplasmic membrane where it interacts with the SRP receptor FtsY. In Archaeoglobus fulgidus (strain ATCC 49558 / DSM 4304 / JCM 9628 / NBRC 100126 / VC-16), this protein is Signal recognition particle 54 kDa protein.